Consider the following 620-residue polypeptide: 1-deoxy-D-xylulose-5-phosphate synthase (620 aa).

Residues His-80 and 121 to 123 contribute to the thiamine diphosphate site; that span reads GHS. A Mg(2+)-binding site is contributed by Asp-152. Thiamine diphosphate-binding positions include 153 to 154, Asn-181, Tyr-288, and Glu-370; that span reads GA. Asn-181 is a binding site for Mg(2+).

The protein belongs to the transketolase family. DXPS subfamily. Homodimer. The cofactor is Mg(2+). Thiamine diphosphate serves as cofactor.

It catalyses the reaction D-glyceraldehyde 3-phosphate + pyruvate + H(+) = 1-deoxy-D-xylulose 5-phosphate + CO2. It participates in metabolic intermediate biosynthesis; 1-deoxy-D-xylulose 5-phosphate biosynthesis; 1-deoxy-D-xylulose 5-phosphate from D-glyceraldehyde 3-phosphate and pyruvate: step 1/1. In terms of biological role, catalyzes the acyloin condensation reaction between C atoms 2 and 3 of pyruvate and glyceraldehyde 3-phosphate to yield 1-deoxy-D-xylulose-5-phosphate (DXP). This is 1-deoxy-D-xylulose-5-phosphate synthase from Cronobacter sakazakii (strain ATCC BAA-894) (Enterobacter sakazakii).